The following is a 135-amino-acid chain: MVYECQTGVQIEAALMFVLPGYDAFLGFLLIAAAVPVLALVTNKLLAPRSQTGERELTYESGMEPIGGAWIQFNIRYYMFALVFVIFDVETVFLYPWAVAFHRLGLLAFIEALVFITILLVALAYAWRKGALEWS.

The next 3 membrane-spanning stretches (helical) occupy residues 15 to 35, 79 to 99, and 104 to 124; these read LMFV…AAAV, MFAL…PWAV, and LGLL…VALA.

It belongs to the complex I subunit 3 family. NDH-1 can be composed of about 15 different subunits; different subcomplexes with different compositions have been identified which probably have different functions.

The protein localises to the cellular thylakoid membrane. It catalyses the reaction a plastoquinone + NADH + (n+1) H(+)(in) = a plastoquinol + NAD(+) + n H(+)(out). It carries out the reaction a plastoquinone + NADPH + (n+1) H(+)(in) = a plastoquinol + NADP(+) + n H(+)(out). In terms of biological role, NDH-1 shuttles electrons from an unknown electron donor, via FMN and iron-sulfur (Fe-S) centers, to quinones in the respiratory and/or the photosynthetic chain. The immediate electron acceptor for the enzyme in this species is believed to be plastoquinone. Couples the redox reaction to proton translocation, and thus conserves the redox energy in a proton gradient. Cyanobacterial NDH-1 also plays a role in inorganic carbon-concentration. The chain is NAD(P)H-quinone oxidoreductase subunit 3 from Synechococcus sp. (strain CC9311).